Reading from the N-terminus, the 184-residue chain is Probable RNA 2'-phosphotransferase (184 aa).

This sequence belongs to the KptA/TPT1 family.

Removes the 2'-phosphate from RNA via an intermediate in which the phosphate is ADP-ribosylated by NAD followed by a presumed transesterification to release the RNA and generate ADP-ribose 1''-2''-cyclic phosphate (APPR&gt;P). May function as an ADP-ribosylase. This Escherichia coli O6:K15:H31 (strain 536 / UPEC) protein is Probable RNA 2'-phosphotransferase.